The primary structure comprises 94 residues: Exodeoxyribonuclease 7 small subunit (94 aa).

The protein belongs to the XseB family. Heterooligomer composed of large and small subunits.

The protein resides in the cytoplasm. It carries out the reaction Exonucleolytic cleavage in either 5'- to 3'- or 3'- to 5'-direction to yield nucleoside 5'-phosphates.. Functionally, bidirectionally degrades single-stranded DNA into large acid-insoluble oligonucleotides, which are then degraded further into small acid-soluble oligonucleotides. The protein is Exodeoxyribonuclease 7 small subunit of Trichormus variabilis (strain ATCC 29413 / PCC 7937) (Anabaena variabilis).